Reading from the N-terminus, the 289-residue chain is MSTHAETRAITAADIRAAKNTRRLAMLTAYDYPTASIADEGGMDMLLVGDSLAMVVLGHEDTLSVTLDEMIHHCRAVTRGASRALVVGDLPFMTYEQGPDQAMHSAARLFREGGVRAVKLEGGKEVAPQVEALVKAGIPVMGHIGLTPQRVAALGGFKVQGRSAAAARSLAEDARILEDAGCFALVLEAIPAPVAAHITRTSGIPTIGIGAGAQCDGQVLVVHDMLGLFDRFTPKFVKRYAELRGHAVKAVQQYGDEVRQGEFPAAQHSFGMPEDEQRRWEENVSGADD.

Positions 50 and 89 each coordinate Mg(2+). 3-methyl-2-oxobutanoate is bound by residues 50–51, aspartate 89, and lysine 119; that span reads DS. Glutamate 121 is a binding site for Mg(2+). Catalysis depends on glutamate 188, which acts as the Proton acceptor. Positions 266–289 are disordered; it reads AQHSFGMPEDEQRRWEENVSGADD.

This sequence belongs to the PanB family. As to quaternary structure, homodecamer; pentamer of dimers. Mg(2+) serves as cofactor.

Its subcellular location is the cytoplasm. The catalysed reaction is 3-methyl-2-oxobutanoate + (6R)-5,10-methylene-5,6,7,8-tetrahydrofolate + H2O = 2-dehydropantoate + (6S)-5,6,7,8-tetrahydrofolate. The protein operates within cofactor biosynthesis; (R)-pantothenate biosynthesis; (R)-pantoate from 3-methyl-2-oxobutanoate: step 1/2. In terms of biological role, catalyzes the reversible reaction in which hydroxymethyl group from 5,10-methylenetetrahydrofolate is transferred onto alpha-ketoisovalerate to form ketopantoate. The polypeptide is 3-methyl-2-oxobutanoate hydroxymethyltransferase (Oleidesulfovibrio alaskensis (strain ATCC BAA-1058 / DSM 17464 / G20) (Desulfovibrio alaskensis)).